The chain runs to 328 residues: Global transcription regulator sge1 (328 aa).

2 disordered regions span residues 94 to 120 and 251 to 293; these read PGEK…PRQR and QMHQ…QYVH. 3 stretches are compositionally biased toward low complexity: residues 106-116, 251-261, and 282-293; these read KSTTQSGGISK, QMHQPQVHQPL, and AHQPQVHQQYVH.

This sequence belongs to the MIT1/WOR1 family.

It is found in the nucleus. Global transcriptional regulator of transcription that impacts, but is not absolutely required for secondary metabolism and pathogenicity on maize. Regulates synthesis of multiple secondary metabolites, including fumonisins and fusarins. The polypeptide is Global transcription regulator sge1 (Gibberella moniliformis (strain M3125 / FGSC 7600) (Maize ear and stalk rot fungus)).